Consider the following 158-residue polypeptide: Cyclic pyranopterin monophosphate synthase (158 aa).

Substrate-binding positions include 75–77 (LCH) and 113–114 (ME). The active site involves Asp128.

It belongs to the MoaC family. Homohexamer; trimer of dimers.

It catalyses the reaction (8S)-3',8-cyclo-7,8-dihydroguanosine 5'-triphosphate = cyclic pyranopterin phosphate + diphosphate. It functions in the pathway cofactor biosynthesis; molybdopterin biosynthesis. In terms of biological role, catalyzes the conversion of (8S)-3',8-cyclo-7,8-dihydroguanosine 5'-triphosphate to cyclic pyranopterin monophosphate (cPMP). This is Cyclic pyranopterin monophosphate synthase from Polynucleobacter asymbioticus (strain DSM 18221 / CIP 109841 / QLW-P1DMWA-1) (Polynucleobacter necessarius subsp. asymbioticus).